The primary structure comprises 270 residues: Cerberus (270 aa).

The N-terminal stretch at 1-20 (MLLNVLRICIIVCLVNDGAG) is a signal peptide. Asn-103, Asn-112, and Asn-154 each carry an N-linked (GlcNAc...) asparagine glycan. Cystine bridges form between Cys-169-Cys-215, Cys-183-Cys-229, Cys-193-Cys-245, and Cys-197-Cys-247. Residues 169–253 (CKTLPFTQNI…ECTCEAHKSN (85 aa)) form the CTCK domain. Asn-228 carries an N-linked (GlcNAc...) asparagine glycan.

This sequence belongs to the DAN family. In terms of assembly, the long chain interacts with nodal/nr-1, bmp4 and wnt8, thereby inhibiting their function. The short chain interacts with nodal/nr-1 but not bmp4 or wnt8. As to expression, a component of the Nieuwkoop signaling center in the blastula. Expressed transiently in a broad anterior domain of the gastrula, including the anterior endoderm of the Spemann's organizer and more laterally the cardiac primordia. Expression is excluded from the prospective prechordal plate region and the ring of cells that give rise to the trunk-tail mesoderm.

It is found in the secreted. Its function is as follows. Inhibits wnt, nodal/nr-1 and bmp signaling in the embryo to promote head formation and anterior neural induction. Within the endoderm, acts as an essential mediator of nodal/nr-1-induced cardiogenesis in the overlying mesoderm. The protein is Cerberus of Xenopus laevis (African clawed frog).